Here is a 288-residue protein sequence, read N- to C-terminus: Protein PXR1 (288 aa).

One can recognise a G-patch domain in the interval 25–72 (QSRFGHKHLMRFGWQPGQGLGTQPVQSMKTHIKVSIKDDNLGLGAKLK). The segment at 147 to 258 (SYSQMEKDSS…TSIPESVSTR (112 aa)) is disordered. Over residues 157 to 166 (SDEESDDDED) the composition is skewed to acidic residues. Composition is skewed to basic residues over residues 169–185 (KKHK…KKRK) and 195–214 (KKKK…KDKK). Over residues 238–256 (RTASIESSTSATSIPESVS) the composition is skewed to low complexity.

Belongs to the PINX1 family.

It localises to the nucleus. Its subcellular location is the nucleolus. Functionally, involved in rRNA-processing at A0, A1 and A2 sites and negatively regulates telomerase. This chain is Protein PXR1 (PXR1), found in Candida glabrata (strain ATCC 2001 / BCRC 20586 / JCM 3761 / NBRC 0622 / NRRL Y-65 / CBS 138) (Yeast).